The sequence spans 497 residues: Dol-P-Man:Man(7)GlcNAc(2)-PP-Dol alpha-1,6-mannosyltransferase (497 aa).

The next 7 helical transmembrane spans lie at 10–30 (FLQS…YVVM), 71–91 (FIGA…ISCL), 92–112 (GFPK…IILS), 125–145 (FGNQ…HFLF), 154–174 (ILAL…NFYP), 178–198 (FLIF…GPIG), and 215–235 (YCVG…SIMW). N-linked (GlcNAc...) asparagine glycosylation is present at asparagine 253. 4 consecutive transmembrane segments (helical) span residues 263-285 (IHWY…SLLG), 292-312 (VPFF…LPHK), 316-336 (FIIS…SRIY), and 346-366 (LVNM…VVTF). N-linked (GlcNAc...) asparagine glycosylation occurs at asparagine 435.

It belongs to the glycosyltransferase 22 family.

It is found in the endoplasmic reticulum membrane. It carries out the reaction an alpha-D-Man-(1-&gt;2)-alpha-D-Man-(1-&gt;2)-alpha-D-Man-(1-&gt;3)-[alpha-D-Man-(1-&gt;2)-alpha-D-Man-(1-&gt;3)-alpha-D-Man-(1-&gt;6)]-beta-D-Man-(1-&gt;4)-beta-D-GlcNAc-(1-&gt;4)-alpha-D-GlcNAc-diphospho-di-trans,poly-cis-dolichol + a di-trans,poly-cis-dolichyl beta-D-mannosyl phosphate = an alpha-D-Man-(1-&gt;2)-alpha-D-Man-(1-&gt;2)-alpha-D-Man-(1-&gt;3)-[alpha-D-Man-(1-&gt;2)-alpha-D-Man-(1-&gt;3)-[alpha-D-Man-(1-&gt;6)]-alpha-D-Man-(1-&gt;6)]-beta-D-Man-(1-&gt;4)-beta-D-GlcNAc-(1-&gt;4)-alpha-D-GlcNAc-diphospho-di-trans,poly-cis-dolichol + a di-trans,poly-cis-dolichyl phosphate + H(+). The protein operates within protein modification; protein glycosylation. Mannosyltransferase that operates in the biosynthetic pathway of dolichol-linked oligosaccharides, the glycan precursors employed in protein asparagine (N)-glycosylation. The assembly of dolichol-linked oligosaccharides begins on the cytosolic side of the endoplasmic reticulum membrane and finishes in its lumen. The sequential addition of sugars to dolichol pyrophosphate produces dolichol-linked oligosaccharides containing fourteen sugars, including two GlcNAcs, nine mannoses and three glucoses. Once assembled, the oligosaccharide is transferred from the lipid to nascent proteins by oligosaccharyltransferases. In the lumen of the endoplasmic reticulum, adds the eighth mannose residue in an alpha-1,6 linkage onto Man(7)GlcNAc(2)-PP-dolichol to produce Man(8)GlcNAc(2)-PP-dolichol. In Arabidopsis thaliana (Mouse-ear cress), this protein is Dol-P-Man:Man(7)GlcNAc(2)-PP-Dol alpha-1,6-mannosyltransferase (ALG12).